We begin with the raw amino-acid sequence, 471 residues long: Tryptophanase (471 aa).

Lys270 is subject to N6-(pyridoxal phosphate)lysine.

It belongs to the beta-eliminating lyase family. Homotetramer. The cofactor is pyridoxal 5'-phosphate.

The enzyme catalyses L-tryptophan + H2O = indole + pyruvate + NH4(+). It functions in the pathway amino-acid degradation; L-tryptophan degradation via pyruvate pathway; indole and pyruvate from L-tryptophan: step 1/1. In Histophilus somni (strain 129Pt) (Haemophilus somnus), this protein is Tryptophanase.